The sequence spans 158 residues: MITIDITVESARWNNEKMLYDITEKALKTTMNHLSLENVVSEISLLFTDDKHMAQINAQWRNKNKSTNVLSFPALPLKAGDPPGLMLGDIIIAQETVVLEAKKEGKSFQDHLTHMIVHGILHLLGYNHETNDEACQMEELEREILLKLSINDPYAELS.

Zn(2+)-binding residues include histidine 118, histidine 122, and histidine 128.

Belongs to the endoribonuclease YbeY family. The cofactor is Zn(2+).

The protein localises to the cytoplasm. In terms of biological role, single strand-specific metallo-endoribonuclease involved in late-stage 70S ribosome quality control and in maturation of the 3' terminus of the 16S rRNA. This chain is Endoribonuclease YbeY, found in Bartonella quintana (strain Toulouse) (Rochalimaea quintana).